We begin with the raw amino-acid sequence, 439 residues long: Ribosomal protein uS12 methylthiotransferase RimO (439 aa).

The MTTase N-terminal domain maps to 7-119 (KQLCLISLGC…IDILIAKKQN (113 aa)). [4Fe-4S] cluster-binding residues include Cys16, Cys50, Cys82, Cys151, Cys155, and Cys158. The Radical SAM core domain maps to 137 to 368 (TGSSVHAYVK…ALKHQNHSFK (232 aa)).

The protein belongs to the methylthiotransferase family. RimO subfamily. Requires [4Fe-4S] cluster as cofactor.

The protein localises to the cytoplasm. The enzyme catalyses L-aspartate(89)-[ribosomal protein uS12]-hydrogen + (sulfur carrier)-SH + AH2 + 2 S-adenosyl-L-methionine = 3-methylsulfanyl-L-aspartate(89)-[ribosomal protein uS12]-hydrogen + (sulfur carrier)-H + 5'-deoxyadenosine + L-methionine + A + S-adenosyl-L-homocysteine + 2 H(+). Functionally, catalyzes the methylthiolation of an aspartic acid residue of ribosomal protein uS12. This chain is Ribosomal protein uS12 methylthiotransferase RimO, found in Helicobacter pylori (strain HPAG1).